A 171-amino-acid chain; its full sequence is Co-chaperone protein HscB (171 aa).

Positions 2 to 74 (DYFTLFGLPA…LTRAEYLLSL (73 aa)) constitute a J domain.

The protein belongs to the HscB family. In terms of assembly, interacts with HscA and stimulates its ATPase activity. Interacts with IscU.

Functionally, co-chaperone involved in the maturation of iron-sulfur cluster-containing proteins. Seems to help targeting proteins to be folded toward HscA. The polypeptide is Co-chaperone protein HscB (Salmonella typhimurium (strain LT2 / SGSC1412 / ATCC 700720)).